The following is a 122-amino-acid chain: Large ribosomal subunit protein uL14 (122 aa).

This sequence belongs to the universal ribosomal protein uL14 family. In terms of assembly, part of the 50S ribosomal subunit. Forms a cluster with proteins L3 and L19. In the 70S ribosome, L14 and L19 interact and together make contacts with the 16S rRNA in bridges B5 and B8.

Binds to 23S rRNA. Forms part of two intersubunit bridges in the 70S ribosome. The protein is Large ribosomal subunit protein uL14 of Borrelia turicatae (strain 91E135).